The chain runs to 176 residues: RNA pyrophosphohydrolase (176 aa).

The Nudix hydrolase domain maps to 6–149 (GYRPNVGIVI…KRDVYRRVMK (144 aa)). The short motif at 38–59 (GGINPGESPEQAMYRELFEEVG) is the Nudix box element.

This sequence belongs to the Nudix hydrolase family. RppH subfamily. A divalent metal cation is required as a cofactor.

Accelerates the degradation of transcripts by removing pyrophosphate from the 5'-end of triphosphorylated RNA, leading to a more labile monophosphorylated state that can stimulate subsequent ribonuclease cleavage. In Proteus mirabilis (strain HI4320), this protein is RNA pyrophosphohydrolase.